The chain runs to 140 residues: MLMGICALAFDFGTKSIGCAVGQSITGTAQALPAFKAQNGIPNWDSIEKCLKEWKPDILVVGLPLNMDGTEQEFTSRARKFANRLHGRFGVKVELQDERLTTTEARTEIFQRGGYKALNKSKVDGISAALILESWFERHS.

Belongs to the YqgF nuclease family.

Its subcellular location is the cytoplasm. Its function is as follows. Could be a nuclease involved in processing of the 5'-end of pre-16S rRNA. The polypeptide is Putative pre-16S rRNA nuclease (Mannheimia succiniciproducens (strain KCTC 0769BP / MBEL55E)).